A 799-amino-acid polypeptide reads, in one-letter code: High affinity nerve growth factor receptor (799 aa).

Positions 1–33 are cleaved as a signal peptide; that stretch reads MLRGQRLGQLGWHRPAAGLGSLMTSLMLACASA. Topologically, residues 34–420 are extracellular; it reads ASCREVCCPV…VEKKDETPFG (387 aa). 2 disulfide bridges follow: Cys-36-Cys-41 and Cys-40-Cys-50. N-linked (GlcNAc...) asparagine glycosylation occurs at Asn-67. 2 LRR repeats span residues 90–113 and 116–137; these read LGEL…AFRF and RLSH…TVQG. Residues Asn-121, Asn-190, Asn-204, Asn-255, Asn-264, Asn-320, Asn-325, Asn-341, Asn-361, and Asn-404 are each glycosylated (N-linked (GlcNAc...) asparagine). Residues 148 to 219 form the LRRCT domain; it reads NPLHCSCALF…GDDVFLQCQV (72 aa). Cysteines 154 and 193 form a disulfide. Ig-like C2-type domains lie at 196 to 285 and 205 to 368; these read PTVK…VSVS and DSVE…LAAN. Intrachain disulfides connect Cys-217-Cys-267 and Cys-302-Cys-348. Residues 421–441 traverse the membrane as a helical segment; the sequence is VSVAVGLAVSAALFLSALLLV. The Cytoplasmic segment spans residues 442–799; the sequence is LNKCGQRSKF…APPSYLDVLG (358 aa). An interaction with SQSTM1 region spans residues 472–493; the sequence is MTLGGSSLSPTEGKGSGLQGHI. The residue at position 499 (Tyr-499) is a Phosphotyrosine; by autocatalysis. Residues 513-784 enclose the Protein kinase domain; it reads IILKWELGEG…LSMKDVHARL (272 aa). ATP-binding positions include 519 to 527 and Lys-547; that span reads LGEGAFGKV. Asp-653 serves as the catalytic Proton acceptor. Phosphotyrosine; by autocatalysis occurs at positions 679, 683, 684, and 794.

This sequence belongs to the protein kinase superfamily. Tyr protein kinase family. Insulin receptor subfamily. As to quaternary structure, exists in a dynamic equilibrium between monomeric (low affinity) and dimeric (high affinity) structures. Homodimerization is induced by binding of a NGF dimer. Found in a complex, at least composed of KIDINS220, MAGI2, NTRK1 and RAPGEF2; the complex is mainly formed at late endosomes in a nerve growth factor (NGF)-dependent manner. Interacts with RAPGEF2; the interaction is strengthened after NGF stimulation. Interacts with SQSTM1; bridges NTRK1 to NGFR. Forms a ternary complex with NGFR and KIDINS220; this complex is affected by the expression levels of KIDINS220 and an increase in KIDINS220 expression leads to a decreased association of NGFR and NTRK1. Interacts (phosphorylated upon activation by NGF) with SHC1; mediates SHC1 phosphorylation and activation. Interacts (phosphorylated upon activation by NGF) with PLCG1; mediates PLCG1 phosphorylation and activation. Interacts (phosphorylated) with SH2B1 and SH2B2. Interacts with GRB2. Interacts with PIK3R1. Interacts with FRS2. Interacts with SORT1; may regulate NTRK1 anterograde axonal transport. Interacts with SH2D1A; regulates NTRK1. Interacts with NRADD. Interacts with RAB7A. Interacts with PTPRS. Interacts with USP36; USP36 does not deubiquitinate NTRK1. Interacts with GGA3. Interacts with TSPAN1; this interaction promotes NTRK1 stability. In terms of processing, ligand-mediated autophosphorylation. Interaction with SQSTM1 is phosphotyrosine-dependent. Autophosphorylation at Tyr-499 mediates interaction and phosphorylation of SHC1. N-glycosylated. Post-translationally, ubiquitinated. Undergoes polyubiquitination upon activation; regulated by NGFR. Ubiquitination by NEDD4L leads to degradation. Ubiquitination regulates the internalization of the receptor.

It is found in the cell membrane. It localises to the early endosome membrane. Its subcellular location is the late endosome membrane. The protein resides in the recycling endosome membrane. It carries out the reaction L-tyrosyl-[protein] + ATP = O-phospho-L-tyrosyl-[protein] + ADP + H(+). With respect to regulation, the pro-survival signaling effect of NTRK1 in neurons requires its endocytosis into signaling early endosomes and its retrograde axonal transport. This is regulated by different proteins including CFL1, RAC1 and SORT1. NTF3 is unable to induce this signaling probably due to the lability of the NTF3-NTRK1 complex in endosomes. SH2D1A inhibits the autophosphorylation of the receptor, and alters the recruitment and activation of downstream effectors and signaling cascades. Regulated by NGFR. Functionally, receptor tyrosine kinase involved in the development and the maturation of the central and peripheral nervous systems through regulation of proliferation, differentiation and survival of sympathetic and nervous neurons. High affinity receptor for NGF which is its primary ligand, it can also bind and be activated by NTF3/neurotrophin-3. However, NTF3 only supports axonal extension through NTRK1 but has no effect on neuron survival. Upon dimeric NGF ligand-binding, undergoes homodimerization, autophosphorylation and activation. Recruits, phosphorylates and/or activates several downstream effectors including SHC1, FRS2, SH2B1, SH2B2 and PLCG1 that regulate distinct overlapping signaling cascades driving cell survival and differentiation. Through SHC1 and FRS2 activates a GRB2-Ras-MAPK cascade that regulates cell differentiation and survival. Through PLCG1 controls NF-Kappa-B activation and the transcription of genes involved in cell survival. Through SHC1 and SH2B1 controls a Ras-PI3 kinase-AKT1 signaling cascade that is also regulating survival. In absence of ligand and activation, may promote cell death, making the survival of neurons dependent on trophic factors. The polypeptide is High affinity nerve growth factor receptor (Ntrk1) (Mus musculus (Mouse)).